The primary structure comprises 484 residues: Sperm motility kinase 2B (484 aa).

A Protein kinase domain is found at 8–256 (YVMLETIGHG…VAEVMVHPWV (249 aa)). Residues 14 to 22 (IGHGGCSKV) and K37 contribute to the ATP site. The Proton acceptor role is filled by D127. The region spanning 272 to 314 (PLKPNPAIVKAMGYIGFQAQDIEDSLRQRKFNETMASYCLLKK) is the UBA domain. 2 stretches are compositionally biased toward polar residues: residues 356–373 (PTSLRLSANRQMSVCGRS) and 422–434 (SSDDSTEGHTSAS). Disordered regions lie at residues 356 to 400 (PTSL…TMDH) and 422 to 450 (SSDDSTEGHTSASAEDKPVRSRGWPRGIK).

Belongs to the protein kinase superfamily. CAMK Ser/Thr protein kinase family. Smok subfamily. Testis-specific. Expressed in the testis from 22 days postpartum (22 dpp).

The catalysed reaction is L-seryl-[protein] + ATP = O-phospho-L-seryl-[protein] + ADP + H(+). It catalyses the reaction L-threonyl-[protein] + ATP = O-phospho-L-threonyl-[protein] + ADP + H(+). In terms of biological role, may play a role in sperm motility, especially in the regulation of flagellar function. In Mus musculus (Mouse), this protein is Sperm motility kinase 2B.